Consider the following 1828-residue polypeptide: Chromodomain-helicase-DNA-binding protein 2 (1828 aa).

Over residues 1-14 (MMRNKDKSQEEDSS) the composition is skewed to basic and acidic residues. A disordered region spans residues 1 to 243 (MMRNKDKSQE…EDDDFETDSD (243 aa)). Positions 15 to 75 (LHSNASSHSA…SESESAGSKS (61 aa)) are enriched in low complexity. Basic and acidic residues-rich tracts occupy residues 81 to 101 (EAKE…KMWE), 115 to 128 (SRQE…KEEA), and 146 to 155 (KKQEKWKQEP). Over residues 175–204 (VKARRPVPRRTVPKPRVKKQPKTQRGKRKK) the composition is skewed to basic residues. A phosphoserine mark is found at Ser-207 and Ser-208. Acidic residues predominate over residues 234–243 (EDDDFETDSD). The residue at position 240 (Thr-240) is a Phosphothreonine. A Phosphoserine modification is found at Ser-242. 2 Chromo domains span residues 261-353 (ETIE…QWLG) and 378-456 (QIVE…IPTR). Residues 496-666 (AHSWCKNNSV…WSLLHFIMPE (171 aa)) form the Helicase ATP-binding domain. ATP is bound at residue 509 to 516 (DEMGLGKT). The DEAH box signature appears at 617 to 620 (DEAH). A Helicase C-terminal domain is found at 795–946 (LLDKLLTRLR…HLVIQRMDTT (152 aa)). Disordered regions lie at residues 1030–1124 (EDEE…RSVR), 1331–1462 (VTGG…DEDD), 1556–1638 (HKKR…ADRG), and 1680–1828 (HMDA…VRKT). The segment covering 1037–1065 (ERPHKDWDEIIPEEQRKKVEEEERQKELE) has biased composition (basic and acidic residues). Phosphoserine occurs at positions 1085, 1087, 1365, and 1386. The span at 1347 to 1371 (KKENKVPRLKEEHGIELSSPRHSDN) shows a compositional bias: basic and acidic residues. Composition is skewed to basic and acidic residues over residues 1396 to 1431 (ENKE…KSGD) and 1565 to 1574 (EQKKKDDVTG). Residues 1464-1566 (LDQETFSICK…KKRSQEEEEQ (103 aa)) form a CHD1 helical C-terminal domain (CHCT) region. Polar residues predominate over residues 1584 to 1601 (SGSSRDSLISQSHTSHNL). Basic and acidic residues-rich tracts occupy residues 1698-1720 (RPYD…DRHH), 1739-1749 (QDFRRMSDHRP), 1760-1772 (DHYR…KLGE), and 1795-1814 (SPHD…RSLE). A Phosphoserine modification is found at Ser-1807.

The protein belongs to the SNF2/RAD54 helicase family. In terms of assembly, interacts with MYOD1. Interacts with histone H3.3.

Its subcellular location is the nucleus. The catalysed reaction is ATP + H2O = ADP + phosphate + H(+). In terms of biological role, ATP-dependent chromatin-remodeling factor that specifically binds to the promoter of target genes, leading to chromatin remodeling, possibly by promoting deposition of histone H3.3. Involved in myogenesis via interaction with MYOD1: binds to myogenic gene regulatory sequences and mediates incorporation of histone H3.3 prior to the onset of myogenic gene expression, promoting their expression. The sequence is that of Chromodomain-helicase-DNA-binding protein 2 (CHD2) from Homo sapiens (Human).